A 341-amino-acid chain; its full sequence is GTPase Obg (341 aa).

The Obg domain maps to 1 to 159 (MKFVDEALIK…RNLRLELRVL (159 aa)). A disordered region spans residues 128–150 (TRYKSSVNRSPRQTTPGSPGESR). The segment covering 129–144 (RYKSSVNRSPRQTTPG) has biased composition (polar residues). The 175-residue stretch at 160-334 (ADVGLLGLPN…LCYALMQLID (175 aa)) folds into the OBG-type G domain. GTP is bound by residues 166–173 (GLPNAGKS), 191–195 (FTTLH), 213–216 (DIPG), 283–286 (NKID), and 315–317 (SAI). Mg(2+) contacts are provided by serine 173 and threonine 193.

The protein belongs to the TRAFAC class OBG-HflX-like GTPase superfamily. OBG GTPase family. As to quaternary structure, monomer. Mg(2+) is required as a cofactor.

Its subcellular location is the cytoplasm. Functionally, an essential GTPase which binds GTP, GDP and possibly (p)ppGpp with moderate affinity, with high nucleotide exchange rates and a fairly low GTP hydrolysis rate. Plays a role in control of the cell cycle, stress response, ribosome biogenesis and in those bacteria that undergo differentiation, in morphogenesis control. The polypeptide is GTPase Obg (Legionella pneumophila (strain Paris)).